A 498-amino-acid polypeptide reads, in one-letter code: Glycerol kinase (498 aa).

Thr14 contacts ADP. Thr14, Thr15, and Ser16 together coordinate ATP. Thr14 serves as a coordination point for sn-glycerol 3-phosphate. Arg18 serves as a coordination point for ADP. Positions 84, 85, 136, and 245 each coordinate sn-glycerol 3-phosphate. Glycerol-binding residues include Arg84, Glu85, Tyr136, Asp245, and Gln246. Residues Thr267 and Gly310 each contribute to the ADP site. Thr267, Gly310, Gln314, and Gly410 together coordinate ATP. Residues Gly410 and Asn414 each contribute to the ADP site.

The protein belongs to the FGGY kinase family.

It carries out the reaction glycerol + ATP = sn-glycerol 3-phosphate + ADP + H(+). It participates in polyol metabolism; glycerol degradation via glycerol kinase pathway; sn-glycerol 3-phosphate from glycerol: step 1/1. Its activity is regulated as follows. Inhibited by fructose 1,6-bisphosphate (FBP). In terms of biological role, key enzyme in the regulation of glycerol uptake and metabolism. Catalyzes the phosphorylation of glycerol to yield sn-glycerol 3-phosphate. The protein is Glycerol kinase of Rhodospirillum centenum (strain ATCC 51521 / SW).